The sequence spans 144 residues: Eukaryotic translation initiation factor 1A, Y-chromosomal (144 aa).

Positions 1-15 (MPKNKGKGGKNRRRG) are enriched in basic residues. The segment at 1–26 (MPKNKGKGGKNRRRGKNENESEKREL) is disordered. Residues 16-26 (KNENESEKREL) are compositionally biased toward basic and acidic residues. An S1-like domain is found at 22 to 96 (EKRELVFKED…NKADVILKYN (75 aa)). Lys88 is covalently cross-linked (Glycyl lysine isopeptide (Lys-Gly) (interchain with G-Cter in ubiquitin)). A disordered region spans residues 114–144 (KINETDTFGPGDDDEIQFDDIGDDDEDIDDI). Residues 124–144 (GDDDEIQFDDIGDDDEDIDDI) show a composition bias toward acidic residues.

It belongs to the eIF-1A family. In terms of assembly, component of the 43S pre-initiation complex (43S PIC), which is composed of the 40S ribosomal subunit, EIF1, eIF1A (EIF1AX), eIF3 complex, EIF5 and eIF2-GTP-initiator tRNA complex (eIF2 ternary complex). Interacts with EIF5; this interaction contributes to the maintenance of EIF1 within the open 43S PIC. Interacts through its C-terminal domain (CTD) with the CTD of EIF5B; from the location of the start codon by the 43S complex until the formation of the 80S complex. As to expression, ubiquitous.

Its subcellular location is the cytoplasm. Component of the 43S pre-initiation complex (43S PIC), which binds to the mRNA cap-proximal region, scans mRNA 5'-untranslated region, and locates the initiation codon. This protein enhances formation of the cap-proximal complex. Together with EIF1, facilitates scanning, start codon recognition, promotion of the assembly of 48S complex at the initiation codon (43S PIC becomes 48S PIC after the start codon is reached), and dissociation of aberrant complexes. After start codon location, together with EIF5B orients the initiator methionine-tRNA in a conformation that allows 60S ribosomal subunit joining to form the 80S initiation complex. Is released after 80S initiation complex formation, just after GTP hydrolysis by EIF5B, and before release of EIF5B. Its globular part is located in the A site of the 40S ribosomal subunit. Its interaction with EIF5 during scanning contribute to the maintenance of EIF1 within the open 43S PIC. In contrast to yeast orthologs, does not bind EIF1. This is Eukaryotic translation initiation factor 1A, Y-chromosomal (EIF1AY) from Homo sapiens (Human).